Consider the following 485-residue polypeptide: Bcl-2-like protein 13 (485 aa).

The short motif at 14 to 30 is the BH4 element; sequence ETKYVVLSYLGLLSQEK. S38 carries the phosphoserine modification. The BH3 motif lies at 100 to 116; sequence MEDCLAHLGEKVSQELK. A BH1 motif is present at residues 147–157; that stretch reads ASGWNKILVPL. The BH2 signature appears at 193–206; the sequence is YIIQQGGWGTVFSL. The interval 218–248 is disordered; sequence AEDSNDIYILPSDNSGQVSPPESPTVTTSWQ. Positions 229-248 are enriched in polar residues; it reads SDNSGQVSPPESPTVTTSWQ. One copy of the A repeat lies at 246 to 256; it reads SWQSESLPVSL. Residues S259, S261, S303, S326, S371, S375, S410, S420, S426, S429, and S444 each carry the phosphoserine modification. Residues 261 to 271 form an A; approximate repeat; it reads SWHTESLPVSL. The tract at residues 418–451 is disordered; it reads EESLVEELSPASEKKPVPPSEGKSRLSPAGEMKP. Residues 425–441 form a B repeat; the sequence is LSPASEKKPVPPSEGKS. Residues 443–459 form a B; approximate repeat; that stretch reads LSPAGEMKPMPLSEGKS. Residues 460–480 form a helical membrane-spanning segment; it reads ILLFGGAAAVAILAVAIGVAL.

Belongs to the Bcl-2 family. In terms of assembly, monomer. Ubiquitous, with the highest levels of expression in heart, placenta and pancreas.

It is found in the mitochondrion membrane. The protein localises to the nucleus. Functionally, may promote the activation of caspase-3 and apoptosis. In Homo sapiens (Human), this protein is Bcl-2-like protein 13 (BCL2L13).